A 309-amino-acid polypeptide reads, in one-letter code: Mycothiol acetyltransferase (309 aa).

N-acetyltransferase domains lie at Glu-16–Pro-158 and Val-166–Thr-309. A 1D-myo-inositol 2-(L-cysteinylamino)-2-deoxy-alpha-D-glucopyranoside-binding site is contributed by Glu-47. Leu-92–Val-94 contacts acetyl-CoA. 3 residues coordinate 1D-myo-inositol 2-(L-cysteinylamino)-2-deoxy-alpha-D-glucopyranoside: Glu-193, Lys-232, and Glu-241. Acetyl-CoA is bound by residues Leu-245–Ile-247 and Gln-252–Lys-258. Residue Tyr-279 participates in 1D-myo-inositol 2-(L-cysteinylamino)-2-deoxy-alpha-D-glucopyranoside binding.

This sequence belongs to the acetyltransferase family. MshD subfamily. In terms of assembly, monomer.

The enzyme catalyses 1D-myo-inositol 2-(L-cysteinylamino)-2-deoxy-alpha-D-glucopyranoside + acetyl-CoA = mycothiol + CoA + H(+). Catalyzes the transfer of acetyl from acetyl-CoA to desacetylmycothiol (Cys-GlcN-Ins) to form mycothiol. In Streptomyces coelicolor (strain ATCC BAA-471 / A3(2) / M145), this protein is Mycothiol acetyltransferase.